Here is a 398-residue protein sequence, read N- to C-terminus: 1-deoxy-D-xylulose 5-phosphate reductoisomerase (398 aa).

Residues Thr-11, Gly-12, Ser-13, Ile-14, Arg-38, Asn-39, and Asn-125 each contribute to the NADPH site. Position 126 (Lys-126) interacts with 1-deoxy-D-xylulose 5-phosphate. Glu-127 contacts NADPH. Asp-151 contacts Mn(2+). Residues Ser-152, Glu-153, Ser-179, and His-202 each coordinate 1-deoxy-D-xylulose 5-phosphate. Residue Glu-153 participates in Mn(2+) binding. NADPH is bound at residue Gly-208. The 1-deoxy-D-xylulose 5-phosphate site is built by Ser-215, Asn-220, Lys-221, and Glu-224. Residue Glu-224 participates in Mn(2+) binding.

Belongs to the DXR family. Mg(2+) is required as a cofactor. Requires Mn(2+) as cofactor.

The enzyme catalyses 2-C-methyl-D-erythritol 4-phosphate + NADP(+) = 1-deoxy-D-xylulose 5-phosphate + NADPH + H(+). It functions in the pathway isoprenoid biosynthesis; isopentenyl diphosphate biosynthesis via DXP pathway; isopentenyl diphosphate from 1-deoxy-D-xylulose 5-phosphate: step 1/6. Catalyzes the NADPH-dependent rearrangement and reduction of 1-deoxy-D-xylulose-5-phosphate (DXP) to 2-C-methyl-D-erythritol 4-phosphate (MEP). The polypeptide is 1-deoxy-D-xylulose 5-phosphate reductoisomerase (Burkholderia cenocepacia (strain HI2424)).